The primary structure comprises 266 residues: Mitochondrial genome maintenance protein MGM101 (266 aa).

A mitochondrion-targeting transit peptide spans Met1 to Tyr23. 2 stretches are compositionally biased toward polar residues: residues Lys37–Thr47 and Pro57–Thr68. The interval Lys37–Thr68 is disordered.

It belongs to the MGM101 family. In terms of assembly, forms homooligomers in vitro.

The protein localises to the mitochondrion matrix. Its subcellular location is the mitochondrion nucleoid. Functionally, plays a role in the replication of the mitochondrial genome and the maintenance of its telomeres. Able to catalyze strand annealing and D-loop formation. Binds a wide variety of DNA substrates. Exhibited the highest affinity for DNA molecules carrying 3' ssDNA overhangs (Y-form, 3' FLAP, 3' overhang) and for substrates with complex structures (X-O and Fork). Forms homogeneous ring-shaped structures at the ssDNA native telomeres ends. Oligomers seem to bind to the ssDNA as a filament until they reach the double-stranded region and induce the formation of bends and loops within the double-stranded part of the molecules. The chain is Mitochondrial genome maintenance protein MGM101 from Candida parapsilosis (strain CDC 317 / ATCC MYA-4646) (Yeast).